Consider the following 164-residue polypeptide: Urocortin-3 (164 aa).

An N-terminal signal peptide occupies residues 1-23 (MLMPTYFLLPLLLLLGGPRTSLS). A propeptide spanning residues 24 to 121 (HKFYNTGPVF…PDKPKSDRGT (98 aa)) is cleaved from the precursor. The segment at 58–120 (SFGHLPTQDP…YPDKPKSDRG (63 aa)) is disordered. Over residues 110–120 (LYPDKPKSDRG) the composition is skewed to basic and acidic residues. Isoleucine amide is present on I160.

This sequence belongs to the sauvagine/corticotropin-releasing factor/urotensin I family. Binds with high affinity to CRF receptors 2-alpha and 2-beta. In terms of tissue distribution, expressed in some areas of the brain including the hypothalamus, amygdala, and brainstem, but is not evident in the cerebellum, pituitary, or cerebral cortex; it is also expressed peripherally in small intestine and skin.

Its subcellular location is the secreted. Its function is as follows. Suppresses food intake, delays gastric emptying and decreases heat-induced edema. Might represent an endogenous ligand for maintaining homeostasis after stress. The sequence is that of Urocortin-3 (Ucn3) from Mus musculus (Mouse).